A 329-amino-acid chain; its full sequence is Vitamin B12 import system permease protein BtuC (329 aa).

A run of 9 helical transmembrane segments spans residues 18-38 (WLLS…CAGE), 64-84 (LAVL…QALF), 91-111 (PGLL…VLLG), 115-135 (LPGW…TLIL), 149-169 (LLAG…AIYF), 191-208 (WQQS…IWIC), 243-263 (GWMV…GLVI), 277-297 (VLLP…DVVA), and 305-325 (ELPI…WLLL).

This sequence belongs to the binding-protein-dependent transport system permease family. FecCD subfamily. In terms of assembly, the complex is composed of two ATP-binding proteins (BtuD), two transmembrane proteins (BtuC) and a solute-binding protein (BtuF).

The protein localises to the cell inner membrane. Its function is as follows. Part of the ABC transporter complex BtuCDF involved in vitamin B12 import. Involved in the translocation of the substrate across the membrane. The sequence is that of Vitamin B12 import system permease protein BtuC from Salmonella arizonae (strain ATCC BAA-731 / CDC346-86 / RSK2980).